Here is a 138-residue protein sequence, read N- to C-terminus: Large ribosomal subunit protein eL14B (138 aa).

The residue at position 2 (S2) is an N-acetylserine.

The protein belongs to the eukaryotic ribosomal protein eL14 family. In terms of assembly, component of the large ribosomal subunit (LSU). Mature yeast ribosomes consist of a small (40S) and a large (60S) subunit. The 40S small subunit contains 1 molecule of ribosomal RNA (18S rRNA) and 33 different proteins (encoded by 57 genes). The large 60S subunit contains 3 rRNA molecules (25S, 5.8S and 5S rRNA) and 46 different proteins (encoded by 81 genes). In terms of processing, N-terminally acetylated by acetyltransferase NatA.

The protein resides in the cytoplasm. Functionally, component of the ribosome, a large ribonucleoprotein complex responsible for the synthesis of proteins in the cell. The small ribosomal subunit (SSU) binds messenger RNAs (mRNAs) and translates the encoded message by selecting cognate aminoacyl-transfer RNA (tRNA) molecules. The large subunit (LSU) contains the ribosomal catalytic site termed the peptidyl transferase center (PTC), which catalyzes the formation of peptide bonds, thereby polymerizing the amino acids delivered by tRNAs into a polypeptide chain. The nascent polypeptides leave the ribosome through a tunnel in the LSU and interact with protein factors that function in enzymatic processing, targeting, and the membrane insertion of nascent chains at the exit of the ribosomal tunnel. This is Large ribosomal subunit protein eL14B from Saccharomyces cerevisiae (strain ATCC 204508 / S288c) (Baker's yeast).